The chain runs to 424 residues: Sulfate adenylyltransferase (424 aa).

The protein belongs to the sulfate adenylyltransferase family.

The catalysed reaction is sulfate + ATP + H(+) = adenosine 5'-phosphosulfate + diphosphate. Its pathway is sulfur metabolism; hydrogen sulfide biosynthesis; sulfite from sulfate: step 1/3. The protein is Sulfate adenylyltransferase of Desulfatibacillum aliphaticivorans.